The sequence spans 184 residues: Peptide deformylase (184 aa).

C99 and H141 together coordinate Fe cation. E142 is an active-site residue. H145 lines the Fe cation pocket.

Belongs to the polypeptide deformylase family. It depends on Fe(2+) as a cofactor.

The catalysed reaction is N-terminal N-formyl-L-methionyl-[peptide] + H2O = N-terminal L-methionyl-[peptide] + formate. Removes the formyl group from the N-terminal Met of newly synthesized proteins. Requires at least a dipeptide for an efficient rate of reaction. N-terminal L-methionine is a prerequisite for activity but the enzyme has broad specificity at other positions. This Chlamydia abortus (strain DSM 27085 / S26/3) (Chlamydophila abortus) protein is Peptide deformylase.